The following is a 588-amino-acid chain: BTB/POZ domain-containing protein At3g26490 (588 aa).

The BTB domain occupies 28-99 (NDLVIQVKST…CYGITITLCA (72 aa)). One can recognise an NPH3 domain in the interval 218–507 (RWWGEDLAEL…VQILFVEQAR (290 aa)). Residues S376 and S378 each carry the phosphoserine modification. Y448 carries the phosphotyrosine modification. A disordered region spans residues 529-554 (FTTRREEGGQEEEERDETKPSGGFLQ).

It belongs to the NPH3 family.

Its pathway is protein modification; protein ubiquitination. May act as a substrate-specific adapter of an E3 ubiquitin-protein ligase complex (CUL3-RBX1-BTB) which mediates the ubiquitination and subsequent proteasomal degradation of target proteins. The sequence is that of BTB/POZ domain-containing protein At3g26490 from Arabidopsis thaliana (Mouse-ear cress).